Reading from the N-terminus, the 76-residue chain is Exodeoxyribonuclease 7 small subunit (76 aa).

It belongs to the XseB family. As to quaternary structure, heterooligomer composed of large and small subunits.

Its subcellular location is the cytoplasm. The enzyme catalyses Exonucleolytic cleavage in either 5'- to 3'- or 3'- to 5'-direction to yield nucleoside 5'-phosphates.. Bidirectionally degrades single-stranded DNA into large acid-insoluble oligonucleotides, which are then degraded further into small acid-soluble oligonucleotides. This Latilactobacillus sakei subsp. sakei (strain 23K) (Lactobacillus sakei subsp. sakei) protein is Exodeoxyribonuclease 7 small subunit.